Here is a 390-residue protein sequence, read N- to C-terminus: Spore development regulator vosA (390 aa).

Residues 3–132 (NNTSSDFDLI…ADQGVKLRIR (130 aa)) form the Velvet domain. Basic and acidic residues predominate over residues 137–149 (TMLKRSTRPDEFH). Disordered regions lie at residues 137–191 (TMLK…PVKR) and 265–390 (QASA…GTPQ). A compositionally biased stretch (low complexity) spans 165-175 (PPSSSYGGYPP). Residues 273-280 (IPDPTGQS) carry the Nuclear localization signal motif. 2 stretches are compositionally biased toward polar residues: residues 350–364 (QTPQ…SQMV) and 371–390 (SSVT…GTPQ).

This sequence belongs to the velvet family. VosA subfamily. Forms a heterodimeric complex with velB; the formation of the velB-vosA complex is light-dependent. Interacts with velA, velB and velC.

It localises to the nucleus. Its function is as follows. Component of the velB-VosA heterodimeric complex that plays a dual role in activating genes associated with spore maturation and repressing certain development-associated genes. The complex binds DNA through the DNA-binding domain of vosA that recognizes an 11-nucleotide consensus sequence 5'-CTGGCCGCGGC-3' consisting of two motifs in the promoters of key developmental regulatory genes. In Penicillium rubens (strain ATCC 28089 / DSM 1075 / NRRL 1951 / Wisconsin 54-1255) (Penicillium chrysogenum), this protein is Spore development regulator vosA.